The sequence spans 178 residues: Lipid A deacylase PagL (178 aa).

Positions 1 to 19 (MQFLKKNKPLFGIVTLALA) are cleaved as a signal peptide. Active-site charge relay system residues include His-154, Ser-156, and Asp-168.

Belongs to the PagL family. As to quaternary structure, homodimer.

The protein resides in the cell outer membrane. It catalyses the reaction a 3-(acyloxy)acyl derivative of bacterial toxin + H2O = a 3-hydroxyacyl derivative of bacterial toxin + a fatty acid + H(+). Its function is as follows. Has lipid A 3-O-deacylase activity. Hydrolyzes the ester bond at the 3 position of lipid A, a bioactive component of lipopolysaccharide (LPS), thereby releasing the primary fatty acyl moiety. The polypeptide is Lipid A deacylase PagL (Bordetella bronchiseptica (strain ATCC BAA-588 / NCTC 13252 / RB50) (Alcaligenes bronchisepticus)).